A 128-amino-acid polypeptide reads, in one-letter code: LIM domain-containing protein 2 (128 aa).

Met-1 is subject to N-acetylmethionine. The segment at 1–25 is disordered; it reads MFQAAGAAQATPSHEAKGSSGSSTV. Residues 39 to 99 enclose the LIM zinc-binding domain; sequence ETCAACQKTV…RPHFQQLFKS (61 aa). Zn(2+) contacts are provided by Cys-41, Cys-44, His-62, Cys-65, Cys-68, Cys-71, Cys-89, and His-92.

In terms of assembly, interacts with ILK.

It is found in the cytoplasm. Its subcellular location is the nucleus. Functionally, acts as an activator of the protein-kinase ILK, thereby regulating cell motility. The sequence is that of LIM domain-containing protein 2 from Mus musculus (Mouse).